A 377-amino-acid chain; its full sequence is MSADGEFTRTQIFGTVFEITNRYTELNPVGMGAFGLVCSAVDRLTGQNVAVKKVMKPFSTSVLAKRTYRELKLLKHLKHENLITLDDIFISPLEDIYFVNELQGTDLHRLLNSRPLEKQFIQYFTYQIMRGLKYIHSAGVIHRDLKPSNILINENCDLKICDFGLARLQDPQMTGYVSTRYYRAPEIMLTWQKYDTEVDLWSVGCILAEMIEGKPLFPGKDHVHQFSIITELLGSPPADVIDTICSENTLRFVQSLPHRDPIPFSERFASCTHVEPEAIDLLAKLLVFDPKKRISAVEGLTHPYMEAYHDPTDEPVCESKFDWSFNDADLPVDTWRVMMYSEILDFHQTVGVANETEGSEQPDSQVEQNNLDSANGA.

Residues Y23–M305 form the Protein kinase domain. ATP-binding positions include V29–V37 and K52. Residue D144 is the Proton acceptor of the active site. At T174 the chain carries Phosphothreonine. The TXY motif lies at T174–Y176. Residue Y176 is modified to Phosphotyrosine. The disordered stretch occupies residues N354–A377. Residues S359 to A377 are compositionally biased toward polar residues.

It belongs to the protein kinase superfamily. Ser/Thr protein kinase family. MAP kinase subfamily. HOG1 sub-subfamily. Requires Mg(2+) as cofactor. In terms of processing, dually phosphorylated on Thr-174 and Tyr-176, which activates the enzyme. Phosphorylated in response to oxidative and salt stress.

The protein resides in the cytoplasm. Its subcellular location is the nucleus. The enzyme catalyses L-seryl-[protein] + ATP = O-phospho-L-seryl-[protein] + ADP + H(+). The catalysed reaction is L-threonyl-[protein] + ATP = O-phospho-L-threonyl-[protein] + ADP + H(+). Activated by tyrosine and threonine phosphorylation. Functionally, proline-directed serine/threonine-protein kinase involved in a signal transduction pathway that is activated by changes in the osmolarity of the extracellular environment. Controls osmotic regulation of transcription of target genes. Regulates stress-induced production and accumulation of glycerol and D-arabitol. HOG1 is also involved in virulence, morphogenesis and oxidative stress response especially through its role in chlamydospore formation, an oxygen-dependent morphogenetic program. In Candida albicans (strain SC5314 / ATCC MYA-2876) (Yeast), this protein is Mitogen-activated protein kinase HOG1 (HOG1).